A 538-amino-acid chain; its full sequence is Natural resistance-associated macrophage protein 1 (538 aa).

Residues 1–36 (MTGDTDPPKQSRTQYGSISSSPSPGPPQVPPGGTYL) form a disordered region. Over 1–54 (MTGDTDPPKQSRTQYGSISSSPSPGPPQVPPGGTYLSEKIPIPNAEPGTFSLRK) the chain is Cytoplasmic. A helical transmembrane segment spans residues 55 to 75 (LWAFTGPGFLMSIAYLDPGNI). The Extracellular portion of the chain corresponds to 76 to 81 (QSDLQA). The helical transmembrane segment at 82–102 (GAVAGFKLLWVLLWATVLGLL) threads the bilayer. At 103-139 (CQRLAARLGVVTGKDLGEICHLYYPKVPRTLLWLNME) the chain is on the cytoplasmic side. A helical membrane pass occupies residues 140–160 (LAIVGSDMQEVIGTAIAFNLL). Topologically, residues 161 to 164 (SAGR) are extracellular. The chain crosses the membrane as a helical span at residues 165–185 (IPLWGGVLITVVDTFFFLYLN). Residues 186–193 (NYGLRKLE) are Cytoplasmic-facing. The chain crosses the membrane as a helical span at residues 194 to 214 (AFFAFLIAIMAFTFGYEYVVA). Residues 215-240 (RPAQGALLRGLFLPSCSGCGQPELLQ) lie on the Extracellular side of the membrane. Residues 241–261 (AVGIVGAIIMPHNIYLHSALV) traverse the membrane as a helical segment. Over 262 to 286 (KSREVDRTRREDIREANMYFLIEST) the chain is Cytoplasmic. The helical transmembrane segment at 287 to 307 (IALFVSFFINLFVMAVFGQAF) threads the bilayer. The Extracellular segment spans residues 308 to 346 (YQQTNQAAFNICANSSLHDYAKIFPRNNLTVAVDFYQGG). 2 N-linked (GlcNAc...) asparagine glycosylation sites follow: N321 and N335. The helical transmembrane segment at 347-367 (VILGCLFGPAALYIWAVGLLA) threads the bilayer. The Cytoplasmic segment spans residues 368–394 (AGQSSTMTGTYAGQFVMEGFLKLRWSR). A helical membrane pass occupies residues 395–415 (FARLLLTRSCAILPALLVAVF). Over 416–432 (KELQDLSSLNDLLNVLQ) the chain is Extracellular. The helical transmembrane segment at 433–453 (SLLLPFAVLPILTFTSMPALM) threads the bilayer. Over 454 to 468 (QEFASGRVNKVITSS) the chain is Cytoplasmic. The chain crosses the membrane as a helical span at residues 469–489 (IMLLVCAINFYFLVSYLPSLP). The Extracellular segment spans residues 490 to 492 (HPA). A helical membrane pass occupies residues 493-513 (YFGLVALLAVIYLGLTTYLVW). The Cytoplasmic portion of the chain corresponds to 514-538 (TCLIAHGATLLVHSSHQHFLYGLLE).

It belongs to the NRAMP family.

The protein localises to the late endosome membrane. It is found in the lysosome membrane. It catalyses the reaction Zn(2+)(in) + H(+)(out) = Zn(2+)(out) + H(+)(in). It carries out the reaction Fe(2+)(in) + H(+)(out) = Fe(2+)(out) + H(+)(in). The enzyme catalyses Mn(2+)(in) + H(+)(out) = Mn(2+)(out) + H(+)(in). Its function is as follows. Macrophage-specific antiporter that fluxes metal ions in either direction against a proton gradient. Localized to late endosomal lysosomal membranes, delivers bivalent cations from the cytosol into these acidic compartments where they may directly affect antimicrobial activity. Involved in iron metabolism and host natural resistance to infection with intracellular parasites. Pathogen resistance involves sequestration of Fe(2+) and Mn(2+), cofactors of both prokaryotic and eukaryotic catalases and superoxide dismutases, not only to protect the macrophage against its own generation of reactive oxygen species, but to deny the cations to the pathogen for synthesis of its protective enzymes. The chain is Natural resistance-associated macrophage protein 1 (SLC11A1) from Sus scrofa (Pig).